The chain runs to 402 residues: Phosphopentomutase (402 aa).

Asp-10, Asp-301, His-306, Asp-342, His-343, and His-354 together coordinate Mn(2+).

This sequence belongs to the phosphopentomutase family. Mn(2+) serves as cofactor.

Its subcellular location is the cytoplasm. The enzyme catalyses 2-deoxy-alpha-D-ribose 1-phosphate = 2-deoxy-D-ribose 5-phosphate. It carries out the reaction alpha-D-ribose 1-phosphate = D-ribose 5-phosphate. The protein operates within carbohydrate degradation; 2-deoxy-D-ribose 1-phosphate degradation; D-glyceraldehyde 3-phosphate and acetaldehyde from 2-deoxy-alpha-D-ribose 1-phosphate: step 1/2. Functionally, isomerase that catalyzes the conversion of deoxy-ribose 1-phosphate (dRib-1-P) and ribose 1-phosphate (Rib-1-P) to deoxy-ribose 5-phosphate (dRib-5-P) and ribose 5-phosphate (Rib-5-P), respectively. The chain is Phosphopentomutase from Aeromonas hydrophila subsp. hydrophila (strain ATCC 7966 / DSM 30187 / BCRC 13018 / CCUG 14551 / JCM 1027 / KCTC 2358 / NCIMB 9240 / NCTC 8049).